A 229-amino-acid chain; its full sequence is MLVVSELSKSYPTAGEPLSVLRGVNLELSPGQSAAIVGPSGSGKTTLLQILGTLDEPDSGSVQINGQDPFALDARERAAYRNQTIGFIFQDHHLLPQLSVTENVLIPALANGKPTSDDVSRAAELIDAVGLSHRATHLPRELSGGERERVAIARALLMQPSVVLADEPTGNLDSKTAKTITELLLRLQAEQNTVLVTVTHSLSLADEMNERFELVDGALVRRGRFGITA.

Positions 2-229 constitute an ABC transporter domain; the sequence is LVVSELSKSY…VRRGRFGITA (228 aa). 38-45 contacts ATP; sequence GPSGSGKT.

Belongs to the ABC transporter superfamily. Lipoprotein translocase (TC 3.A.1.125) family. The complex is composed of two ATP-binding proteins (LolD) and two transmembrane proteins (LolC and LolE).

The protein localises to the cell inner membrane. In terms of biological role, part of the ABC transporter complex LolCDE involved in the translocation of mature outer membrane-directed lipoproteins, from the inner membrane to the periplasmic chaperone, LolA. Responsible for the formation of the LolA-lipoprotein complex in an ATP-dependent manner. The sequence is that of Lipoprotein-releasing system ATP-binding protein LolD 1 from Rhodopirellula baltica (strain DSM 10527 / NCIMB 13988 / SH1).